The following is a 220-amino-acid chain: Tumor protein D54 (220 aa).

Met1 is modified (N-acetylmethionine). Phosphoserine occurs at positions 3, 12, and 19. Residues 40–82 (GLTEGEEEELRAELAKVEEEIVTLRQVLAAKERHCGELKRRLG) are a coiled coil. 4 positions are modified to phosphoserine: Ser96, Ser149, Ser168, and Ser175. Thr177 bears the Phosphothreonine mark. At Ser180 the chain carries Phosphoserine. At Thr187 the chain carries Phosphothreonine. The tract at residues 189-220 (KSKVVGGRENGSDNLPPSPGSGDQTLPDHAPF) is disordered. Phosphoserine is present on residues Ser206 and Ser209.

Belongs to the TPD52 family. In terms of assembly, forms a homodimer or heterodimer with other members of the family. Interacts with MAL2.

This Mus musculus (Mouse) protein is Tumor protein D54 (Tpd52l2).